We begin with the raw amino-acid sequence, 223 residues long: Ribose-5-phosphate isomerase A (223 aa).

Residues 32 to 35, 83 to 86, and 96 to 99 contribute to the substrate site; these read TGST, DGAD, and KGGG. Glu105 serves as the catalytic Proton acceptor. Residue Lys123 coordinates substrate.

This sequence belongs to the ribose 5-phosphate isomerase family. Homodimer.

It catalyses the reaction aldehydo-D-ribose 5-phosphate = D-ribulose 5-phosphate. The protein operates within carbohydrate degradation; pentose phosphate pathway; D-ribose 5-phosphate from D-ribulose 5-phosphate (non-oxidative stage): step 1/1. In terms of biological role, catalyzes the reversible conversion of ribose-5-phosphate to ribulose 5-phosphate. The polypeptide is Ribose-5-phosphate isomerase A (Acinetobacter baumannii (strain SDF)).